We begin with the raw amino-acid sequence, 552 residues long: MTDSRANRADATRGVASVSRRRFLAGAGLTAGAIALSSMSTSASAAPSRTLADGDRVPALVIGSGYGGAVAALRLTQAGIPTQIVEMGRSWDTPGSDGKIFCGMLNPDKRSMWLADKTDQPVSNFMGFGINKSIDRYVGVLDSERFSGIKVYQGRGVGGGSLVNGGMAVTPKRNYFEEILPSVDSNEMYNKYFPRANTGLGVNNIDQAWFESTEWYKFARTGRKTAQRSGFTTAFVPNVYDFEYMKKEAAGQVTKSGLGGEVIYGNNAGKKSLDKTYLAQAAATGKLTITTLHRVTKVAPATGSGYSVTMEQIDEQGNVVATKVVTADRVFFAAGSVGTSKLLVSMKAQGHLPNLSSQVGEGWGNNGNIMVGRANHMWDATGSKQATIPTMGIDNWADPTAPIFAEIAPLPAGLETYVSLYLAITKNPERARFQFNSGTGKVDLTWAQSQNQKGIDMAKKVFDKINQKEGTIYRTDLFGVYFKTWGDDFTYHPLGGVLLNKATDNFGRLPEYPGLYVVDGSLVPGNVGVNPFVTITRLAERNMDKIISSDIQ.

The tat-type signal signal peptide spans 1 to 45 (MTDSRANRADATRGVASVSRRRFLAGAGLTAGAIALSSMSTSASA). 8 residues coordinate FAD: tyrosine 66, glycine 67, glutamate 86, glycine 160, asparagine 164, glycine 165, methionine 167, and valine 295. Residues glutamate 406 and histidine 492 each act as proton acceptor in the active site. Residues glycine 520 and phenylalanine 532 each contribute to the FAD site.

This sequence belongs to the GMC oxidoreductase family. FAD serves as cofactor. Post-translationally, predicted to be exported by the Tat system. The position of the signal peptide cleavage has been experimentally proven.

The protein resides in the secreted. It carries out the reaction cholesterol + O2 = cholest-5-en-3-one + H2O2. The enzyme catalyses cholest-5-en-3-one = cholest-4-en-3-one. The protein operates within steroid metabolism; cholesterol degradation. Its function is as follows. Bifunctional enzyme that catalyzes the oxidation and isomerization of cholesterol to cholestenone (cholest-4-en-3-one), an initial step in the cholesterol degradation process. In Brevibacterium sterolicum, this protein is Cholesterol oxidase.